The following is a 263-amino-acid chain: TPR repeat-containing protein DDB_G0285095 (263 aa).

The span at 1 to 25 shows a compositional bias: basic and acidic residues; that stretch reads MGCCGSKEKYNGEDVPKSQRLENRP. The disordered stretch occupies residues 1 to 62; sequence MGCCGSKEKY…ASASQQNNPT (62 aa). TPR repeat units lie at residues 87–120, 121–154, and 162–195; these read SDLL…DTDN, SRAW…AAPK, and SSLL…GARS.

This is TPR repeat-containing protein DDB_G0285095 from Dictyostelium discoideum (Social amoeba).